We begin with the raw amino-acid sequence, 590 residues long: Negative elongation factor C/D (590 aa).

Residues 16–43 form a disordered region; that stretch reads GSAAEWGDEADGGQQEDDSGEGEDDAEV. The segment covering 21-43 has biased composition (acidic residues); sequence WGDEADGGQQEDDSGEGEDDAEV.

Belongs to the NELF-D family. The NELF complex is composed of NELFA, NELFB, NELFCD (isoform NELF-C or isoform NELF-D) and NELFE; NELFA and NELFCD form a stable subcomplex that binds primarily through NELFCD to the N-terminus of NELFB. Binds RNA which may help to stabilize the NELF complex on nucleic acid. In vitro, the NELFA:NELFCD subcomplex binds to ssDNA and ssRNA in a sequence- and structure-dependent manner. Interacts with ARAF. Interacts with PCF11. Interacts with KAT8. Widely expressed. Expressed in heart, brain, lung, placenta, liver, skeletal and cardiac muscle, adrenal, thyroid, kidney and pancreas.

The protein localises to the nucleus. In terms of biological role, essential component of the NELF complex, a complex that negatively regulates the elongation of transcription by RNA polymerase II. The NELF complex, which acts via an association with the DSIF complex and causes transcriptional pausing, is counteracted by the P-TEFb kinase complex. (Microbial infection) The NELF complex is involved in HIV-1 latency possibly involving recruitment of PCF11 to paused RNA polymerase II. The sequence is that of Negative elongation factor C/D (NELFCD) from Homo sapiens (Human).